Consider the following 338-residue polypeptide: Trace amine-associated receptor 9 (338 aa).

Residues Met1–Ala23 are Extracellular-facing. Asn9 is a glycosylation site (N-linked (GlcNAc...) asparagine). Intrachain disulfides connect Cys12-Cys176 and Cys95-Cys180. A helical transmembrane segment spans residues Ile24–Leu48. At His49–Asn58 the chain is on the cytoplasmic side. A helical membrane pass occupies residues Phe59–Thr80. The Extracellular portion of the chain corresponds to Val81–Cys95. The chain crosses the membrane as a helical span at residues Lys96–Ile118. Residues Asp102 and Thr103 each coordinate spermidine. The Cytoplasmic portion of the chain corresponds to Asp119–Val138. Residues Ser139–Thr160 form a helical membrane-spanning segment. At Gly161–Gln186 the chain is on the extracellular side. The tract at residues Glu164 to Val177 is extracellular Loop 2 (ECL2). The helical transmembrane segment at Asn187–Gly208 threads the bilayer. Over Arg209 to Ala246 the chain is Cytoplasmic. A helical transmembrane segment spans residues Ala247–Ile270. Over Asp271–Tyr283 the chain is Extracellular. A helical membrane pass occupies residues Glu284–Phe304. The Cytoplasmic segment spans residues Tyr305–Gly338.

Belongs to the G-protein coupled receptor 1 family. Mainly expressed in neurons of the olfactory epithelium. Also expressed in the intestine.

The protein resides in the cell membrane. Functionally, olfactory receptor specific for trace amines, such as triethylamine, N-methylpiperidine, N,N-dimethylcyclohexylamine (DMCHA), beta-phenylethylamine (beta-PEA), cadaverine (CAD) and polyamines such as spermidine. Trace amine compounds are enriched in animal body fluids and act on trace amine-associated receptors (TAARs) to elicit both intraspecific and interspecific innate behaviors. Trace amine-binding causes a conformation change that triggers signaling via G(s)-class of G alpha proteins (GNAL or GNAS). In mature olfactory sensory neurons, Taar9 is coupled with GNAL/G(olf)G alpha protein and mediates activation of adenylate cyclase activity to activate cAMP signaling and eventually transmit odorant signals to achieve membrane depolarization. In immature olfactory sensory neurons, Taar9 is coupled with GNAS/G(s) G alpha proteins. The chain is Trace amine-associated receptor 9 from Rattus norvegicus (Rat).